The following is a 196-amino-acid chain: Mitochondrial inner membrane protein SHH3 (196 aa).

The N-terminal 53 residues, 1–53 (MKATIQRVTSVFGVPRASVFVPRISTPFILHNYISNGRMDLFSKEFHNGRVSK), are a transit peptide targeting the mitochondrion. The Mitochondrial matrix portion of the chain corresponds to 54 to 97 (SDLWSSNKEEELLVSQRKKRPISPHLTVYEPEMSWYLSSLHRIS). A ubiquinone is bound by residues S91 and R95. A helical membrane pass occupies residues 98 to 118 (GVLLALGFYAFTITLGVTTIM). Topologically, residues 119–137 (GMDTTFQDLNKWYHEKMPK) are mitochondrial intermembrane. A helical membrane pass occupies residues 138–160 (WSQWVAKGSAAYLFAFHFGNGIR). Residue H154 coordinates heme. The Mitochondrial matrix segment spans residues 161 to 174 (HLIWDMGYELTNRG). The helical transmembrane segment at 175 to 195 (VIKTGSIVLAGTLVLGTYLLA) threads the bilayer. A topological domain (mitochondrial intermembrane) is located at residue Q196.

The protein belongs to the cytochrome b560 family.

The protein resides in the mitochondrion inner membrane. Functionally, homolog of SDH3, but seems not to be a stoichiometric subunit of either the succinate dehydrogenase (SDH) complex or the mitochondrial inner membrane translocase TIM22 complex. The sequence is that of Mitochondrial inner membrane protein SHH3 from Saccharomyces cerevisiae (strain ATCC 204508 / S288c) (Baker's yeast).